The sequence spans 629 residues: Neuronal acetylcholine receptor subunit alpha-4 (629 aa).

The first 30 residues, 1 to 30 (MEIGGSGAPPPLLLLPLLLLLGTGLLPASS), serve as a signal peptide directing secretion. Over 32–249 (IETRAHAEER…IIRRLPLFYT (218 aa)) the chain is Extracellular. The N-linked (GlcNAc...) asparagine glycan is linked to N59. 2 residues coordinate Ca(2+): V78 and E80. 2 N-linked (GlcNAc...) asparagine glycosylation sites follow: N109 and N176. 2 disulfides stabilise this stretch: C163–C177 and C227–C228. The helical transmembrane segment at 250–270 (INLIIPCLLISCLTVLVFYLP) threads the bilayer. C273 carries S-palmitoyl cysteine lipidation. Helical transmembrane passes span 279-299 (LCIS…EIIP) and 312-332 (LLFT…VLNV). At 333 to 603 (HHRSPRTHTM…KYVAMVIDRI (271 aa)) the chain is on the cytoplasmic side. Disordered regions lie at residues 420–459 (ETQP…NSSG) and 503–529 (SLTE…SDQT). S427 carries the phosphoserine modification. The span at 431 to 442 (KVPDLKTSEVEK) shows a compositional bias: basic and acidic residues. Low complexity predominate over residues 449 to 459 (PGSCHPPNSSG). Residues 504–529 (LTESKPTGSPASLKTRPSQLPVSDQT) are compositionally biased toward polar residues. A phosphoserine mark is found at S540 and S543. A helical membrane pass occupies residues 604–624 (FLWMFIIVCLLGTVGLFLPPW).

It belongs to the ligand-gated ion channel (TC 1.A.9) family. Acetylcholine receptor (TC 1.A.9.1) subfamily. Alpha-4/CHRNA4 sub-subfamily. In terms of assembly, neuronal AChR is composed of two different types of subunits: alpha and beta. CHRNA4 forms heteropentameric neuronal acetylcholine receptors with CHRNB2 and CHRNB4, as well as CHRNA5 and CHRNB3 as accesory subunits. Found in two major stoichiometric forms, LS (low agonist sensitivity): (CHRNA4)3:(CHRNB2)2 and HS (high agonist sensitivity): (CHRNA4)2:(CHRNB2)3, the two stoichiometric forms differ in their unitary conductance, calcium permeability, ACh sensitivity and potentiation by divalent cation. Cells produce predominantly an (CHRNA4)3:(CHRNB2)2 nAChR. The (CHRNA4)2:(CHRNB2)3 expression is selectively up-regulated by nicotine and has lower single channel conductance and calcium permeability. In the striatum, also forms CHRNA4:CHRNA6:CHRNB2 complexes. Also found in the stoichiometric form: (CHRNA4:CHRNB2)2:CHRNB3. Interacts with RIC3; which is required for proper folding and assembly. Interacts with LYPD6.

It localises to the synaptic cell membrane. The protein resides in the cell membrane. The catalysed reaction is K(+)(in) = K(+)(out). It catalyses the reaction Na(+)(in) = Na(+)(out). It carries out the reaction Ca(2+)(in) = Ca(2+)(out). Its activity is regulated as follows. Activated by a myriad of ligands such as acetylcholine, cytisine, nicotine, choline and epibatidine. Channel potentiation by calcium is stoichiometry-selective, CHRNA4:CHRNB2 nACh receptor is achieved by calcium association with topographically distinct sites framed by anionic residues within the CHRNA4 subunit and between the CHRNA4 and CHRNB2 subunits. nAChR activity is inhibited by the antagonist alpha-conotoxins BuIA, PnIA, GID and MII, small disulfide-constrained peptides from cone snails. In terms of biological role, component of neuronal acetylcholine receptors (nAChRs) that function as pentameric, ligand-gated cation channels with high calcium permeability among other activities. nAChRs are excitatory neurotrasnmitter receptors formed by a collection of nAChR subunits known to mediate synaptic transmission in the nervous system and the neuromuscular junction. Each nAchR subunit confers differential attributes to channel properties, including activation, deactivation and desensitization kinetics, pH sensitivity, cation permeability, and binding to allosteric modulators. CHRNA4 forms heteropentameric neuronal acetylcholine receptors with CHRNB2 and CHRNB4, as well as CHRNA5 and CHRNB3 as accesory subunits. Is the most abundant nAChR subtype expressed in the central nervous system. Found in two major stoichiometric forms,(CHRNA4)3:(CHRNB2)2 and (CHRNA4)2:(CHRNB2)3, the two stoichiometric forms differ in their unitary conductance, calcium permeability, ACh sensitivity and potentiation by divalent cation. Involved in the modulation of calcium-dependent signaling pathways, influences the release of neurotransmitters, including dopamine, glutamate and GABA. In Mus musculus (Mouse), this protein is Neuronal acetylcholine receptor subunit alpha-4 (Chrna4).